The primary structure comprises 101 residues: Small ribosomal subunit protein uS14 (101 aa).

Belongs to the universal ribosomal protein uS14 family. In terms of assembly, part of the 30S ribosomal subunit. Contacts proteins S3 and S10.

Functionally, binds 16S rRNA, required for the assembly of 30S particles and may also be responsible for determining the conformation of the 16S rRNA at the A site. The chain is Small ribosomal subunit protein uS14 from Burkholderia vietnamiensis (strain G4 / LMG 22486) (Burkholderia cepacia (strain R1808)).